A 422-amino-acid polypeptide reads, in one-letter code: Phosphoribosylamine--glycine ligase (422 aa).

Residues 107 to 313 (KDLMKKYDIP…LVQVLLDLLD (207 aa)) form the ATP-grasp domain. Residue 133–194 (VQEKGAPIVI…EEYLSGEEFS (62 aa)) participates in ATP binding. Positions 283 and 285 each coordinate Mg(2+).

The protein belongs to the GARS family. Mg(2+) is required as a cofactor. The cofactor is Mn(2+).

The enzyme catalyses 5-phospho-beta-D-ribosylamine + glycine + ATP = N(1)-(5-phospho-beta-D-ribosyl)glycinamide + ADP + phosphate + H(+). The protein operates within purine metabolism; IMP biosynthesis via de novo pathway; N(1)-(5-phospho-D-ribosyl)glycinamide from 5-phospho-alpha-D-ribose 1-diphosphate: step 2/2. In Bacillus subtilis (strain 168), this protein is Phosphoribosylamine--glycine ligase.